Reading from the N-terminus, the 142-residue chain is Large ribosomal subunit protein uL13 (142 aa).

Belongs to the universal ribosomal protein uL13 family. In terms of assembly, part of the 50S ribosomal subunit.

In terms of biological role, this protein is one of the early assembly proteins of the 50S ribosomal subunit, although it is not seen to bind rRNA by itself. It is important during the early stages of 50S assembly. The chain is Large ribosomal subunit protein uL13 from Shewanella frigidimarina (strain NCIMB 400).